We begin with the raw amino-acid sequence, 192 residues long: Endoribonuclease YbeY (192 aa).

Residues H109, H113, and H119 each coordinate Zn(2+). The disordered stretch occupies residues 142 to 192 (VGAALREGGPARAAETETSWTRSPTSTSTRSPSGSTARGTRARSSRAGSGR). Residues 159 to 180 (TSWTRSPTSTSTRSPSGSTARG) show a composition bias toward low complexity.

This sequence belongs to the endoribonuclease YbeY family. Zn(2+) serves as cofactor.

It is found in the cytoplasm. Its function is as follows. Single strand-specific metallo-endoribonuclease involved in late-stage 70S ribosome quality control and in maturation of the 3' terminus of the 16S rRNA. In Anaeromyxobacter sp. (strain Fw109-5), this protein is Endoribonuclease YbeY.